The following is a 409-amino-acid chain: 1-deoxy-D-xylulose 5-phosphate reductoisomerase (409 aa).

Threonine 5, glycine 6, serine 7, isoleucine 8, glycine 31, asparagine 33, and asparagine 122 together coordinate NADPH. A 1-deoxy-D-xylulose 5-phosphate-binding site is contributed by lysine 123. Residue glutamate 124 participates in NADPH binding. Residue aspartate 148 participates in Mn(2+) binding. 1-deoxy-D-xylulose 5-phosphate-binding residues include serine 149, glutamate 150, serine 186, and histidine 209. Position 150 (glutamate 150) interacts with Mn(2+). Glycine 215 is a binding site for NADPH. 4 residues coordinate 1-deoxy-D-xylulose 5-phosphate: serine 222, asparagine 227, lysine 228, and glutamate 231. Residue glutamate 231 coordinates Mn(2+).

This sequence belongs to the DXR family. It depends on Mg(2+) as a cofactor. The cofactor is Mn(2+).

The catalysed reaction is 2-C-methyl-D-erythritol 4-phosphate + NADP(+) = 1-deoxy-D-xylulose 5-phosphate + NADPH + H(+). It functions in the pathway isoprenoid biosynthesis; isopentenyl diphosphate biosynthesis via DXP pathway; isopentenyl diphosphate from 1-deoxy-D-xylulose 5-phosphate: step 1/6. In terms of biological role, catalyzes the NADPH-dependent rearrangement and reduction of 1-deoxy-D-xylulose-5-phosphate (DXP) to 2-C-methyl-D-erythritol 4-phosphate (MEP). In Parasynechococcus marenigrum (strain WH8102), this protein is 1-deoxy-D-xylulose 5-phosphate reductoisomerase.